The chain runs to 362 residues: Peptide chain release factor 1 (362 aa).

At glutamine 235 the chain carries N5-methylglutamine.

Belongs to the prokaryotic/mitochondrial release factor family. Methylated by PrmC. Methylation increases the termination efficiency of RF1.

Its subcellular location is the cytoplasm. Its function is as follows. Peptide chain release factor 1 directs the termination of translation in response to the peptide chain termination codons UAG and UAA. The chain is Peptide chain release factor 1 from Acinetobacter baylyi (strain ATCC 33305 / BD413 / ADP1).